The primary structure comprises 712 residues: Nucleolin (712 aa).

Positions Met1–Pro305 are disordered. N6-acetyllysine is present on residues Lys9, Lys15, and Lys16. Over residues Val24–Gly43 the composition is skewed to acidic residues. Phosphoserine occurs at positions 28, 34, 41, and 42. Over residues Ala56–Pro107 the composition is skewed to low complexity. Repeat unit 1 spans residues Ala58 to Val65. The tract at residues Ala58–Lys135 is 8 X 8 AA tandem repeats of X-T-P-X-K-K-X-X. Ser67 bears the Phosphoserine mark. 4 positions are modified to phosphothreonine: Thr69, Thr76, Thr84, and Thr92. 3 tandem repeats follow at residues Ala75–Ala82, Val83–Ala90, and Ala91–Val98. Lys96 bears the N6-acetyllysine mark. Thr99 carries the phosphothreonine modification. The stretch at Thr99–Val104 is one 5; truncated repeat. Residue Lys102 is modified to N6-acetyllysine. The stretch at Thr105–Ala112 is repeat 6. Position 106 is a phosphothreonine (Thr106). Lys109 carries the N6-acetyllysine modification. Residue Thr113 is modified to Phosphothreonine. N6-acetyllysine is present on Lys116. 2 consecutive repeat copies span residues Ala120 to Ala127 and Ala128 to Lys135. At Thr121 the chain carries Phosphothreonine. Positions Pro122 to Gly137 are enriched in low complexity. Lys124 carries the post-translational modification N6-acetyllysine. Phosphoserine occurs at positions 145 and 153. Residues Ser145 to Glu171 show a composition bias toward acidic residues. Positions Pro172–Ala183 are enriched in low complexity. Residues Ser184 and Ser206 each carry the phosphoserine modification. Positions Ser184–Met211 are enriched in acidic residues. Thr214 bears the Phosphothreonine mark. A compositionally biased stretch (acidic residues) spans Glu234 to Pro274. The segment covering Val275–Gly302 has biased composition (basic and acidic residues). Lys299 participates in a covalent cross-link: Glycyl lysine isopeptide (Lys-Gly) (interchain with G-Cter in SUMO1); alternate. Residue Lys299 forms a Glycyl lysine isopeptide (Lys-Gly) (interchain with G-Cter in SUMO2); alternate linkage. A Phosphothreonine modification is found at Thr303. RRM domains follow at residues Phe309–Gly385 and Arg395–Glu468. N6-acetyllysine is present on Lys320. Lys326 is covalently cross-linked (Glycyl lysine isopeptide (Lys-Gly) (interchain with G-Cter in SUMO1); alternate). Lys326 is covalently cross-linked (Glycyl lysine isopeptide (Lys-Gly) (interchain with G-Cter in SUMO2); alternate). Position 350 is an N6-acetyllysine (Lys350). Ser358 is subject to Phosphoserine. Thr369 carries the phosphothreonine modification. Lys372 participates in a covalent cross-link: Glycyl lysine isopeptide (Lys-Gly) (interchain with G-Cter in SUMO2). A Glycyl lysine isopeptide (Lys-Gly) (interchain with G-Cter in SUMO2); alternate cross-link involves residue Lys379. Lys379 is modified (N6-acetyllysine; alternate). Lys400 and Lys405 each carry N6-acetyllysine. Thr407 carries the post-translational modification Phosphothreonine. N6-acetyllysine is present on residues Lys429 and Lys446. Phosphoserine occurs at positions 460 and 462. N6-acetyllysine is present on residues Lys469 and Lys479. The RRM 3 domain maps to Lys488–Pro562. Lys515 participates in a covalent cross-link: Glycyl lysine isopeptide (Lys-Gly) (interchain with G-Cter in SUMO2); alternate. Lys515 is modified (N6-acetyllysine; alternate). Position 523 is an N6-acetyllysine (Lys523). Ser565 is modified (phosphoserine). Lys574 bears the N6-acetyllysine mark. An RRM 4 domain is found at Lys574 to Pro649. A Glycyl lysine isopeptide (Lys-Gly) (interchain with G-Cter in SUMO2); alternate cross-link involves residue Lys579. The residue at position 579 (Lys579) is an N6-acetyllysine; alternate. Position 582 is a phosphoserine (Ser582). A Glycyl lysine isopeptide (Lys-Gly) (interchain with G-Cter in SUMO1); alternate cross-link involves residue Lys591. Residue Lys591 forms a Glycyl lysine isopeptide (Lys-Gly) (interchain with G-Cter in SUMO2); alternate linkage. A phosphoserine mark is found at Ser593 and Ser621. Lys626 participates in a covalent cross-link: Glycyl lysine isopeptide (Lys-Gly) (interchain with G-Cter in SUMO2). The segment at Val642–Glu712 is disordered. N6-acetyllysine is present on Lys648. Residues Glu652–Gly698 are compositionally biased toward gly residues. 9 positions are modified to asymmetric dimethylarginine: Arg658, Arg662, Arg668, Arg672, Arg675, Arg681, Arg683, Arg689, and Arg693. An Asymmetric dimethylarginine; alternate modification is found at Arg696. Arg696 carries the post-translational modification Omega-N-methylarginine; alternate. Residues Gly699 to Glu712 are compositionally biased toward basic and acidic residues.

Identified in a IGF2BP1-dependent mRNP granule complex containing untranslated mRNAs. Component of the SWAP complex that consists of NPM1, NCL/nucleolin, PARP1 and SWAP70. Component of a complex which is at least composed of HTATSF1/Tat-SF1, the P-TEFb complex components CDK9 and CCNT1, RNA polymerase II, SUPT5H, and NCL/nucleolin. Interacts with AICDA. Interacts with APTX. Interacts with C1QBP. Interacts with ERBB4. Interacts (via C-terminus) with FMR1 isoform 6 (via N-terminus). Interacts with GZF1; this interaction is important for nucleolar localization of GZF1. Interacts with NSUN2. Interacts with NVL. Interacts (via N-terminus domain) with SETX. Interacts (via RRM1 and C-terminal RRM4/Arg/Gly-rich domains) with TERT; the interaction is important for nucleolar localization of TERT. Interacts with WDR46. Interacts with ZFP36. Interacts with LRRC34. Interacts with RRP1B. Interacts with HNRNPU; this interaction occurs during mitosis. Interacts with RIOK1; RIOK1 recruits NCL to the PRMT5 for symmetrically methylation. Interacts with ZBTB7B. Interacts with MDK; this interaction promotes NCL clustering and lateral movements of this complex into lipid rafts leading to MDK internalization. Interacts with HDGF. Interacts with ALKBH2. Interacts with IGFBP5; this interaction is necessary for IGFBP5 localization to the nucleus. Interacts with DDX24 (when ubiquitinated); this interaction may be important during ribosome biogenesis. Post-translationally, some glutamate residues are glycylated by TTLL8. This modification occurs exclusively on glutamate residues and results in a glycine chain on the gamma-carboxyl group. Symmetrically methylated by PRMT5.

It is found in the nucleus. The protein localises to the nucleolus. It localises to the cytoplasm. Its function is as follows. Nucleolin is the major nucleolar protein of growing eukaryotic cells. It is found associated with intranucleolar chromatin and pre-ribosomal particles. It induces chromatin decondensation by binding to histone H1. It is thought to play a role in pre-rRNA transcription and ribosome assembly. May play a role in the process of transcriptional elongation. Binds RNA oligonucleotides with 5'-UUAGGG-3' repeats more tightly than the telomeric single-stranded DNA 5'-TTAGGG-3' repeats. This Pongo abelii (Sumatran orangutan) protein is Nucleolin (NCL).